A 235-amino-acid polypeptide reads, in one-letter code: MKIVDLAAMEYAEAFALQERLAADVAAGRAEETLLLLEHPPVYTLGRRGDGGSLPDPSVRPVEINRGGDVTWHGPGQLVGYPILDLGCRGRDLHRYLRFLEQVLMDAAASLGVQAWRVAGRTGIWTEGGKLASIGVGVRRWVTMHGFALNICNDLAPFSRIHPCGIVGCPVTTLSREAGRAITVAEAKAAVAAPFAGLPADALPEQPRDAVQPSSCDDVHAPSTTSRRPPCPLTV.

Residues 28–203 enclose the BPL/LPL catalytic domain; that stretch reads GRAEETLLLL…PFAGLPADAL (176 aa). Substrate-binding positions include 66–73, 133–135, and 146–148; these read RGGDVTWH, SIG, and GFA. Cys164 serves as the catalytic Acyl-thioester intermediate. The interval 202 to 235 is disordered; the sequence is ALPEQPRDAVQPSSCDDVHAPSTTSRRPPCPLTV.

It belongs to the LipB family.

The protein localises to the cytoplasm. It catalyses the reaction octanoyl-[ACP] + L-lysyl-[protein] = N(6)-octanoyl-L-lysyl-[protein] + holo-[ACP] + H(+). It functions in the pathway protein modification; protein lipoylation via endogenous pathway; protein N(6)-(lipoyl)lysine from octanoyl-[acyl-carrier-protein]: step 1/2. Its function is as follows. Catalyzes the transfer of endogenously produced octanoic acid from octanoyl-acyl-carrier-protein onto the lipoyl domains of lipoate-dependent enzymes. Lipoyl-ACP can also act as a substrate although octanoyl-ACP is likely to be the physiological substrate. In Geobacter sulfurreducens (strain ATCC 51573 / DSM 12127 / PCA), this protein is Octanoyltransferase.